Consider the following 332-residue polypeptide: Glycerol-3-phosphate dehydrogenase [NAD(P)+] (332 aa).

4 residues coordinate NADPH: Ser11, Phe12, Lys32, and Lys106. Sn-glycerol 3-phosphate is bound by residues Lys106, Gly137, and Ser139. Ala141 lines the NADPH pocket. Sn-glycerol 3-phosphate is bound by residues Lys192, Asp245, Ser255, Arg256, and Asn257. Lys192 acts as the Proton acceptor in catalysis. Arg256 contributes to the NADPH binding site. Val280 and Glu282 together coordinate NADPH.

Belongs to the NAD-dependent glycerol-3-phosphate dehydrogenase family.

It is found in the cytoplasm. It catalyses the reaction sn-glycerol 3-phosphate + NAD(+) = dihydroxyacetone phosphate + NADH + H(+). It carries out the reaction sn-glycerol 3-phosphate + NADP(+) = dihydroxyacetone phosphate + NADPH + H(+). The protein operates within membrane lipid metabolism; glycerophospholipid metabolism. Functionally, catalyzes the reduction of the glycolytic intermediate dihydroxyacetone phosphate (DHAP) to sn-glycerol 3-phosphate (G3P), the key precursor for phospholipid synthesis. This Staphylococcus haemolyticus (strain JCSC1435) protein is Glycerol-3-phosphate dehydrogenase [NAD(P)+].